Consider the following 270-residue polypeptide: Glutamate racemase (270 aa).

Residues 10–11 and 42–43 each bind substrate; these read DS and YG. Catalysis depends on Cys74, which acts as the Proton donor/acceptor. 75-76 contributes to the substrate binding site; the sequence is NT. The Proton donor/acceptor role is filled by Cys189. 190–191 provides a ligand contact to substrate; the sequence is TH.

Belongs to the aspartate/glutamate racemases family.

It catalyses the reaction L-glutamate = D-glutamate. It participates in cell wall biogenesis; peptidoglycan biosynthesis. Functionally, provides the (R)-glutamate required for cell wall biosynthesis. The chain is Glutamate racemase from Bartonella quintana (strain Toulouse) (Rochalimaea quintana).